The primary structure comprises 556 residues: tRNA (guanine(37)-N(1))-methyltransferase (556 aa).

The transit peptide at 1-30 (MIITTKALTVLPHSGLRTTHRSLLARLRHY) directs the protein to the mitochondrion. Residues H249, 287–288 (DL), 315–316 (DA), and N346 each bind S-adenosyl-L-methionine. Disordered regions lie at residues 444-465 (QHEEEDLPQLEEAKRPSNKMKD) and 524-556 (KKAAKPAPKPLPAKNKSKPDTKKIEADLNEMQM). 2 stretches are compositionally biased toward basic and acidic residues: residues 454–465 (EEAKRPSNKMKD) and 540–549 (SKPDTKKIEA).

This sequence belongs to the class I-like SAM-binding methyltransferase superfamily. TRM5/TYW2 family. As to quaternary structure, monomer.

It localises to the mitochondrion matrix. The protein resides in the nucleus. The protein localises to the cytoplasm. It carries out the reaction guanosine(37) in tRNA + S-adenosyl-L-methionine = N(1)-methylguanosine(37) in tRNA + S-adenosyl-L-homocysteine + H(+). In terms of biological role, specifically methylates the N1 position of guanosine-37 in various cytoplasmic and mitochondrial tRNAs. Methylation is not dependent on the nature of the nucleoside 5' of the target nucleoside. This is the first step in the biosynthesis of wybutosine (yW), a modified base adjacent to the anticodon of tRNAs and required for accurate decoding. The protein is tRNA (guanine(37)-N(1))-methyltransferase of Anopheles gambiae (African malaria mosquito).